Reading from the N-terminus, the 391-residue chain is Ferrochelatase (391 aa).

2 residues coordinate Fe cation: H196 and E281.

This sequence belongs to the ferrochelatase family.

It localises to the cytoplasm. It carries out the reaction heme b + 2 H(+) = protoporphyrin IX + Fe(2+). Its pathway is porphyrin-containing compound metabolism; protoheme biosynthesis; protoheme from protoporphyrin-IX: step 1/1. Functionally, catalyzes the ferrous insertion into protoporphyrin IX. This Prochlorococcus marinus (strain AS9601) protein is Ferrochelatase.